The primary structure comprises 91 residues: RNA-binding protein Hfq (91 aa).

The region spanning 9–69 is the Sm domain; it reads DRFLNMLRTG…ISTIMPSSFV (61 aa).

Belongs to the Hfq family. As to quaternary structure, homohexamer.

Its function is as follows. RNA chaperone that binds small regulatory RNA (sRNAs) and mRNAs to facilitate mRNA translational regulation in response to envelope stress, environmental stress and changes in metabolite concentrations. Also binds with high specificity to tRNAs. This is RNA-binding protein Hfq from Pseudothermotoga lettingae (strain ATCC BAA-301 / DSM 14385 / NBRC 107922 / TMO) (Thermotoga lettingae).